A 331-amino-acid polypeptide reads, in one-letter code: Inner membrane ABC transporter permease protein YjfF (331 aa).

Over 1 to 5 the chain is Cytoplasmic; the sequence is MIKRN. The chain crosses the membrane as a helical span at residues 6–26; the sequence is LPLMITIGVFVLGYLYCLTQF. Topologically, residues 27 to 42 are periplasmic; the sequence is PGFASTRVICNILTDN. Residues 43 to 63 form a helical membrane-spanning segment; the sequence is AFLGIIAVGMTFVILSGGIDL. Residues 64–88 are Cytoplasmic-facing; the sequence is SVGSVIAFTGVFLAKVIGDFGLSPL. A helical membrane pass occupies residues 89-109; it reads LAFPLVLVMGCAFGAFMGLLI. Topologically, residues 110 to 113 are periplasmic; the sequence is DALK. A helical membrane pass occupies residues 114–134; it reads IPAFIITLAGMFFLRGVSYLV. The Cytoplasmic segment spans residues 135-159; sequence SEESIPINHPIYDTLSSLAWKIPGG. The chain crosses the membrane as a helical span at residues 160-180; sequence GRLSAMGLLMLAVVVIGIFLA. Residues 181–222 are Periplasmic-facing; sequence HRTRFGNQVYAIGGNATSANLMGISTRSTTIRIYMLSTGLAT. Residues 223 to 243 form a helical membrane-spanning segment; sequence LAGIVFSIYTQAGYALAGVGV. The Cytoplasmic segment spans residues 244 to 250; that stretch reads ELDAIAS. Residues 251–271 form a helical membrane-spanning segment; the sequence is VVIGGTLLSGGVGTVLGTLFG. The Periplasmic portion of the chain corresponds to 272 to 294; it reads VAIQGLIQTYINFDGTLSSWWTK. Residues 295 to 315 form a helical membrane-spanning segment; it reads IAIGILLFIFIALQRGLTVLW. Topologically, residues 316–331 are cytoplasmic; the sequence is ENRQSSPVTRVNIAQQ.

Belongs to the binding-protein-dependent transport system permease family. AraH/RbsC subfamily. In terms of assembly, the complex is composed of two ATP-binding proteins (YtfR), two transmembrane proteins (YtfT and YjfF) and a solute-binding protein (YtfQ).

It localises to the cell inner membrane. In terms of biological role, part of the ABC transporter complex YtfQRT-YjfF involved in galactofuranose transport. Probably responsible for the translocation of the substrate across the membrane. This Escherichia coli (strain K12) protein is Inner membrane ABC transporter permease protein YjfF (yjfF).